Here is a 122-residue protein sequence, read N- to C-terminus: MIQMQTNLDVADNSGARRVMCIKVLGGAKRRYAGVGDKIVVSVKEAIPRGRVKKGDVLQAIVVRTSQGIKRKDGSVIRFDKNAAVIVNKQSEPIGTRIFGPVPRELRAKNHMKIISLAPEVL.

The protein belongs to the universal ribosomal protein uL14 family. Part of the 50S ribosomal subunit. Forms a cluster with proteins L3 and L19. In the 70S ribosome, L14 and L19 interact and together make contacts with the 16S rRNA in bridges B5 and B8.

Functionally, binds to 23S rRNA. Forms part of two intersubunit bridges in the 70S ribosome. The polypeptide is Large ribosomal subunit protein uL14 (Phenylobacterium zucineum (strain HLK1)).